A 338-amino-acid polypeptide reads, in one-letter code: Tetraacyldisaccharide 4'-kinase (338 aa).

Residue histidine 51 to threonine 58 participates in ATP binding.

The protein belongs to the LpxK family.

The catalysed reaction is a lipid A disaccharide + ATP = a lipid IVA + ADP + H(+). The protein operates within glycolipid biosynthesis; lipid IV(A) biosynthesis; lipid IV(A) from (3R)-3-hydroxytetradecanoyl-[acyl-carrier-protein] and UDP-N-acetyl-alpha-D-glucosamine: step 6/6. Functionally, transfers the gamma-phosphate of ATP to the 4'-position of a tetraacyldisaccharide 1-phosphate intermediate (termed DS-1-P) to form tetraacyldisaccharide 1,4'-bis-phosphate (lipid IVA). This chain is Tetraacyldisaccharide 4'-kinase, found in Rhodopseudomonas palustris (strain BisB5).